The primary structure comprises 457 residues: 1-carboxybiuret hydrolase subunit AtzE (457 aa).

Active-site charge relay system residues include lysine 74 and serine 150. The Acyl-ester intermediate role is filled by serine 174.

Belongs to the amidase family. As to quaternary structure, heterotetramer consisting of 2 AtzE and 2 AtzG subunits.

The catalysed reaction is 1-carboxybiuret + H2O = urea-1,3-dicarboxylate + NH4(+). The protein operates within xenobiotic degradation; atrazine degradation. Functionally, hydrolyzes 1-carboxybiuret to urea-1,3-dicarboxylate and NH(3). The chain is 1-carboxybiuret hydrolase subunit AtzE from Pseudomonas sp. (strain ADP).